A 334-amino-acid chain; its full sequence is MDQTLIQEILEVVEQAAIASAKLSGKGLKNEADAAAVEAMRKRMGQIQMQGRIVIGEGERDEAPMLYIGEEVGSGTGPGVDFAVDPCEGTNLCAFNQRGSMAVLAASDRGGLFNAPDFYMKKLAAPPAAKGKVDIRKSATENIKILSECLGLAVDELTIVVMDRARHKDLIAEIRATGARIQPISDGDVQAAIACGFAGTGTHCLMGIGAAPEGVISAAAMRALGGHFQGQLVYDPAVAQTSEWADMTKEGNLARLAEMGITDPDKVYEAEELACGEHVCFAGSGITDGLLFHGVKFERDCTRTSSLVISNLDNTCRFTNTVHIKDGAQSIALS.

Positions 33, 57, 85, and 88 each coordinate Mn(2+). Substrate is bound by residues 88 to 90, tyrosine 119, 164 to 166, and 186 to 188; these read EGT, RAR, and DGD. Glutamate 213 is a binding site for Mn(2+).

The protein belongs to the FBPase class 2 family. As to quaternary structure, homotetramer. It depends on Mn(2+) as a cofactor.

It catalyses the reaction beta-D-fructose 1,6-bisphosphate + H2O = beta-D-fructose 6-phosphate + phosphate. The catalysed reaction is D-sedoheptulose 1,7-bisphosphate + H2O = D-sedoheptulose 7-phosphate + phosphate. The protein operates within carbohydrate biosynthesis; Calvin cycle. In terms of biological role, catalyzes the hydrolysis of fructose 1,6-bisphosphate (Fru 1,6-P2) and sedoheptulose 1,7-bisphosphate (Sed 1,7-P2) to fructose 6-phosphate and sedoheptulose 7-phosphate, respectively. The polypeptide is D-fructose 1,6-bisphosphatase class 2/sedoheptulose 1,7-bisphosphatase (Parasynechococcus marenigrum (strain WH8102)).